The chain runs to 283 residues: MDLLGAHVSIAGGIHNAVDRGVSSGCGVIQIFTQNSNQWKGKAVSPADAQLFRDKLTASGLSHVVSHDIYLINLAAAPGEVKDKSLIAFKEEMQRCAALGIDKIVMHPGSHTGDGEETGIRRICEAFDQLFAEVPEFTGKVLLENTAGQGTNLGYRFDHLKSIIEGSSYPTRFGVCFDTCHAFASGYPIADRDGYRRTFDEFDSALGIDKLMAFHLNDSKKGLGCKVDRHEHIGAGALGLEPFRFILNDPHFKLVPKFIETPKGDADEMDVVNLKLLRSLVEG.

Zn(2+) contacts are provided by histidine 67, histidine 107, glutamate 144, aspartate 178, histidine 181, histidine 215, aspartate 228, histidine 230, and glutamate 260.

The protein belongs to the AP endonuclease 2 family. The cofactor is Zn(2+).

It catalyses the reaction Endonucleolytic cleavage to 5'-phosphooligonucleotide end-products.. Functionally, endonuclease IV plays a role in DNA repair. It cleaves phosphodiester bonds at apurinic or apyrimidinic (AP) sites, generating a 3'-hydroxyl group and a 5'-terminal sugar phosphate. The sequence is that of Probable endonuclease 4 from Citrifermentans bemidjiense (strain ATCC BAA-1014 / DSM 16622 / JCM 12645 / Bem) (Geobacter bemidjiensis).